A 110-amino-acid chain; its full sequence is MSAHLTVQVCYALPGEQTLIQLQLPPGVTLRQAIDASGVLTRHPEIDLTKHKTGVYGKLKPLDAVLADHDRVEIYRPLIVDPKLARQRRVEKSRQEGSVEGRKWLPKDSR.

The tract at residues 86 to 110 (RQRRVEKSRQEGSVEGRKWLPKDSR) is disordered. A compositionally biased stretch (basic and acidic residues) spans 88 to 110 (RRVEKSRQEGSVEGRKWLPKDSR).

The protein belongs to the UPF0125 (RnfH) family.

The polypeptide is Protein RnfH (Paraburkholderia phymatum (strain DSM 17167 / CIP 108236 / LMG 21445 / STM815) (Burkholderia phymatum)).